We begin with the raw amino-acid sequence, 927 residues long: Translation initiation factor IF-2 (927 aa).

Residues 27-338 (LGLPVKSHAS…APKPVTERKF (312 aa)) form a disordered region. The segment covering 49–69 (SFSSSKTKAPTNSVQTNQGVK) has biased composition (polar residues). 2 stretches are compositionally biased toward basic and acidic residues: residues 70 to 86 (TESKTVETKQGLSDDKP) and 101 to 138 (FKAEREARAKAEAEKRQHNGDHRKNNRHNDTRSDDRRH). Residues 146–159 (GNRNDNRQGQQNNR) are compositionally biased toward low complexity. Composition is skewed to basic and acidic residues over residues 160-171 (NKNDGRYADHKQ), 202-226 (YSRHSEQRFREEQEAKRQAAKEQEL), and 234-257 (AQEEAQKAKEKLASKPVAKVKEIV). A compositionally biased stretch (low complexity) spans 300–316 (NWNNQNQVRNQRNSNWN). In terms of domain architecture, tr-type G spans 428–597 (ERPPVVTIMG…LLVAEMEELK (170 aa)). A G1 region spans residues 437–444 (GHVDHGKT). 437-444 (GHVDHGKT) contacts GTP. The interval 462–466 (GITQH) is G2. The segment at 483–486 (DTPG) is G3. GTP-binding positions include 483 to 487 (DTPGH) and 537 to 540 (NKID). Positions 537–540 (NKID) are G4. The segment at 573–575 (SAK) is G5.

It belongs to the TRAFAC class translation factor GTPase superfamily. Classic translation factor GTPase family. IF-2 subfamily.

The protein localises to the cytoplasm. Its function is as follows. One of the essential components for the initiation of protein synthesis. Protects formylmethionyl-tRNA from spontaneous hydrolysis and promotes its binding to the 30S ribosomal subunits. Also involved in the hydrolysis of GTP during the formation of the 70S ribosomal complex. This is Translation initiation factor IF-2 from Streptococcus agalactiae serotype Ia (strain ATCC 27591 / A909 / CDC SS700).